Reading from the N-terminus, the 164-residue chain is V-type proton ATPase subunit c' (164 aa).

The Vacuolar portion of the chain corresponds to 1-14 (MSTQLASNIYAPLY). A helical transmembrane segment spans residues 15-37 (APFFGFAGCAAAMVLSCLGAAIG). Residues 38 to 59 (TAKSGIGIAGIGTFKPELIMKS) lie on the Cytoplasmic side of the membrane. A helical transmembrane segment spans residues 60–80 (LIPVVMSGILAIYGLVVAVLI). The Vacuolar portion of the chain corresponds to 81–98 (AGNLSPTEDYTLFNGFMH). A helical transmembrane segment spans residues 99-120 (LSCGLCVGFACLSSGYAIGMVG). Over 121 to 132 (DVGVRKYMHQPR) the chain is Cytoplasmic. Residues 133–158 (LFVGIVLILIFSEVLGLYGMIVALIL) traverse the membrane as a helical segment. Residues 159–164 (NTRGSE) lie on the Vacuolar side of the membrane.

Belongs to the V-ATPase proteolipid subunit family. As to quaternary structure, V-ATPase is a heteromultimeric enzyme composed of a peripheral catalytic V1 complex (components A to H) attached to an integral membrane V0 proton pore complex (components: a, c, c', c'', d, e, f and VOA1). The decameric c-ring forms the proton-conducting pore, and is composed of eight proteolipid subunits c, one subunit c' and one subunit c''.

The protein resides in the vacuole membrane. Proton-conducting pore forming subunit of the V0 complex of vacuolar(H+)-ATPase (V-ATPase), a multisubunit enzyme composed of a peripheral complex (V1) that hydrolyzes ATP and a membrane integral complex (V0) that translocates protons. V-ATPase is responsible for acidifying and maintaining the pH of intracellular compartments. The chain is V-type proton ATPase subunit c' (VMA11) from Saccharomyces cerevisiae (strain ATCC 204508 / S288c) (Baker's yeast).